A 91-amino-acid chain; its full sequence is Small ribosomal subunit protein uS19 (91 aa).

It belongs to the universal ribosomal protein uS19 family.

Protein S19 forms a complex with S13 that binds strongly to the 16S ribosomal RNA. The sequence is that of Small ribosomal subunit protein uS19 from Azoarcus sp. (strain BH72).